A 448-amino-acid polypeptide reads, in one-letter code: MTTRILTGITPTGTPHLGNYAGAIRPAILASRRSDVDSFYFLADYHALIKCDDPARIQRSRLEIAATWLAGGLDVERATFYRQSDIPEIPELTWLLTCVSAKGLLNRAHAYKAAVDRNVEAGEDPDAGVTMGLYSYPVLMAADILMFNAHKIPVGRDQVQHVEMARDIGQRFNHLFGNGREFFVLPEAVIEENVATLPGLDGRKMSKSYDNTIPLFSPSRQLKDAIARIVTDSRAPGEPKDPDSSHLFLLYSAFASAEQVAAFRQELLEGLAWGEAKQRLFQLLDNELGEARERYQALIAKPDDIEDILLAGAAKARRIATPFIAELREAVGLRSLREPLKSAESGKKKAAKAARLVSFRDDDGSFRFRLLDAAGEQLLLSRAFADGKAAGAVSKRLLAGETADLRAEGNAFGLWLDGEAVAQSPAFADAAARDAAIERTREALAPQE.

Residues 10 to 12 (TPT) and 18 to 19 (GN) contribute to the ATP site. Positions 11–19 (PTGTPHLGN) match the 'HIGH' region motif. L-tryptophan is bound at residue aspartate 143. ATP is bound by residues 155–157 (GRD), leucine 197, and 204–208 (KMSKS). The 'KMSKS' region motif lies at 204–208 (KMSKS).

Belongs to the class-I aminoacyl-tRNA synthetase family. As to quaternary structure, homodimer.

It is found in the cytoplasm. The enzyme catalyses tRNA(Trp) + L-tryptophan + ATP = L-tryptophyl-tRNA(Trp) + AMP + diphosphate + H(+). In terms of biological role, catalyzes the attachment of tryptophan to tRNA(Trp). This is Tryptophan--tRNA ligase from Pseudomonas aeruginosa (strain ATCC 15692 / DSM 22644 / CIP 104116 / JCM 14847 / LMG 12228 / 1C / PRS 101 / PAO1).